Consider the following 315-residue polypeptide: uncharacterized protein (315 aa).

2 coiled-coil regions span residues 184-212 (AGEE…TPEQ) and 238-275 (EEHR…YKEK).

It belongs to the IIV-6 287R family.

This is an uncharacterized protein from Acheta domesticus (House cricket).